The primary structure comprises 195 residues: Calcineurin B homologous protein 1 (195 aa).

The N-myristoyl glycine moiety is linked to residue Gly2. Positions 2–6 (GSRAS) match the Necessary for association with microtubule and interaction with GAPDH motif. EF-hand domains are found at residues 26 to 61 (SQITRLYSRFTSLDKGENGTLSREDFQRIPELAINP), 66 to 101 (IINAFFPEGEDQVNFRGFMRTLAHFRPIEDNEKSKD), 110 to 145 (SRSNKLHFAFRLYDLDKDDKISRDELLQVLRMMVGV), and 151 to 186 (QLGSIADRTIQEADQDGDSAISFTEFVKVLEKVDVE). The Ca(2+) site is built by Asp123, Asp125, Asp127, Lys129, and Glu134. The short motif at 138 to 147 (VLRMMVGVNI) is the Nuclear export signal 1 element. Asp164, Asp166, Asp168, and Glu175 together coordinate Ca(2+). Residues 176 to 185 (FVKVLEKVDV) carry the Nuclear export signal 2 motif.

This sequence belongs to the calcineurin regulatory subunit family. CHP subfamily. Monomer. Interacts with STK17B; the interaction occurs in a calcium-independent manner and induces the translocation of CHP1 from the Golgi to the nucleus. Interacts with GAPDH; the interaction is direct, occurs in a N-myristoylation-dependent manner and facilitates the ability of CHP1 to bind microtubules. Interacts with KIF1B (via the C-terminal end of the kinesin-motor domain); the interaction occurs in a calcium-dependent manner. Associates (via C-terminal domain) with microtubules; the association occurs with polymerized microtubules during the cell cycle in a myristoylation- and calcium-independent manner and is enhanced by GAPDH. Interacts with PPP3CA. Interacts with SLC9A1/NHE1 (via the cytoplasmic C-terminal domain); the interaction occurs at the plasma membrane in a calcium-dependent manner and at a domain that is critical for growth factor stimulation of the exchanger. Interacts with SLC9A3; increases SLC9A3 trafficking and activity at the plasma membrane. Phosphorylated; decreased phosphorylation is associated with an increase in SLC9A1/NHE1 Na(+)/H(+) exchange activity. Phosphorylation occurs in serum-dependent manner. The phosphorylation state may regulate the binding to SLC9A1/NHE1. In terms of processing, both N-myristoylation and calcium-mediated conformational changes are essential for its function in exocytic traffic. N-myristoylation is required for its association with microtubules and interaction with GAPDH, but not for the constitutive association to membranes.

The protein localises to the nucleus. It is found in the cytoplasm. It localises to the cytoskeleton. The protein resides in the endomembrane system. Its subcellular location is the endoplasmic reticulum-Golgi intermediate compartment. The protein localises to the endoplasmic reticulum. It is found in the cell membrane. It localises to the membrane. Its function is as follows. Calcium-binding protein involved in different processes such as regulation of vesicular trafficking, plasma membrane Na(+)/H(+) exchanger and gene transcription. Involved in the constitutive exocytic membrane traffic. Mediates the association between microtubules and membrane-bound organelles of the endoplasmic reticulum and Golgi apparatus and is also required for the targeting and fusion of transcytotic vesicles (TCV) with the plasma membrane. Functions as an integral cofactor in cell pH regulation by controlling plasma membrane-type Na(+)/H(+) exchange activity. Affects the pH sensitivity of SLC9A1/NHE1 by increasing its sensitivity at acidic pH. Required for the stabilization and localization of SLC9A1/NHE1 at the plasma membrane. Inhibits serum- and GTPase-stimulated Na(+)/H(+) exchange. Plays a role as an inhibitor of ribosomal RNA transcription by repressing the nucleolar UBF1 transcriptional activity. May sequester UBF1 in the nucleoplasm and limit its translocation to the nucleolus. Associates to the ribosomal gene promoter. Acts as a negative regulator of the calcineurin/NFAT signaling pathway. Inhibits NFAT nuclear translocation and transcriptional activity by suppressing the calcium-dependent calcineurin phosphatase activity. Also negatively regulates the kinase activity of the apoptosis-induced kinase STK17B. Inhibits both STK17B auto- and substrate-phosphorylations in a calcium-dependent manner. In Bos taurus (Bovine), this protein is Calcineurin B homologous protein 1 (CHP1).